Consider the following 171-residue polypeptide: 2-vinyl bacteriochlorophyllide hydratase (171 aa).

It participates in porphyrin-containing compound metabolism; bacteriochlorophyll biosynthesis (light-independent). This chain is 2-vinyl bacteriochlorophyllide hydratase (bchF), found in Rhodobacter capsulatus (strain ATCC BAA-309 / NBRC 16581 / SB1003).